A 321-amino-acid chain; its full sequence is Putative zinc finger CCCH domain-containing protein 9 (321 aa).

2 disordered regions span residues 1–59 (MADA…PGKK) and 181–269 (REAE…NLQE). Over residues 10–29 (EAERRSDETESRSIKEPKEK) the composition is skewed to basic and acidic residues. The C3H1-type zinc-finger motif lies at 55-83 (RPGKKDCQFYLKNGLCRYRSSCRFNHPTQ). Positions 164–290 (TEWRFERERM…EARLRLEQIR (127 aa)) form a coiled coil. Composition is skewed to basic and acidic residues over residues 181-224 (REAE…REAQ) and 231-244 (RQRD…REAQ).

This Arabidopsis thaliana (Mouse-ear cress) protein is Putative zinc finger CCCH domain-containing protein 9.